Reading from the N-terminus, the 260-residue chain is Snake venom serine protease KN6 (260 aa).

A signal peptide spans 1–18 (MVLIRVLANLLILQLSYA). The propeptide occupies 19–24 (QKSSEL). One can recognise a Peptidase S1 domain in the interval 25 to 251 (VIGGDECNIN…HLDWIQSIIA (227 aa)). Intrachain disulfides connect cysteine 31–cysteine 165, cysteine 100–cysteine 258, cysteine 144–cysteine 212, cysteine 176–cysteine 191, and cysteine 202–cysteine 227. Catalysis depends on histidine 67, which acts as the Charge relay system. An N-linked (GlcNAc...) asparagine glycan is attached at asparagine 105. Catalysis depends on aspartate 112, which acts as the Charge relay system. Asparagine 172 is a glycosylation site (N-linked (GlcNAc...) asparagine). The active-site Charge relay system is the serine 206. N-linked (GlcNAc...) asparagine glycans are attached at residues asparagine 213 and asparagine 255.

Belongs to the peptidase S1 family. Snake venom subfamily. Monomer. As to expression, expressed by the venom gland.

It localises to the secreted. In terms of biological role, snake venom serine protease that may act in the hemostasis system of the prey. The sequence is that of Snake venom serine protease KN6 from Trimeresurus stejnegeri (Chinese green tree viper).